Consider the following 153-residue polypeptide: Lysine-acyltransferase RtxC (153 aa).

Residue His-32 is part of the active site.

The protein belongs to the RTX toxin acyltransferase family.

The protein resides in the cytoplasm. The enzyme catalyses a fatty acyl-[ACP] + L-lysyl-[protein] = N(6)-(fatty acyl)-L-lysyl-[protein] + holo-[ACP] + H(+). In terms of biological role, catalyzes fatty acylation of the protoxin (RtxA) at internal lysine residues, thereby converting it to the active toxin. This Vibrio cholerae serotype O1 (strain ATCC 39315 / El Tor Inaba N16961) protein is Lysine-acyltransferase RtxC (rtxC).